The following is a 195-amino-acid chain: Early light-induced protein 1, chloroplastic (195 aa).

A chloroplast-targeting transit peptide spans 1–46; the sequence is MATASFNMQSVFAGGLTTRKINTNKLFSAGSFPNLKRNYPVGVRCM. Residues 46–81 are disordered; the sequence is MAEGGPTNEDSSPAPSTSAAQPLPKSPSPPPPMKPK. Positions 56 to 68 are enriched in low complexity; sequence SSPAPSTSAAQPL. The span at 69–79 shows a compositional bias: pro residues; it reads PKSPSPPPPMK. 3 helical membrane-spanning segments follow: residues 104–124, 131–151, and 175–195; these read LAMV…ENVL, GVSW…VPLF, and FAML…GTLV.

This sequence belongs to the ELIP/psbS family.

The protein localises to the plastid. The protein resides in the chloroplast thylakoid membrane. Its function is as follows. Prevents excess accumulation of free chlorophyll by inhibiting the entire chlorophyll biosynthesis pathway (e.g. 5-aminolevulinate synthesis and Mg-protoporphyrin IX chelatase activity), and hence prevent photooxidative stress. Probably involved in the integration of pigments into the mature light-harvesting pigment-protein complexes. Light-harvesting chlorophyll (LHC) a/b-binding protein required to ensure a high rate of chlorophyll accumulation during deetiolation in continuous high light. Involved in seed germination. May fulfill a photoprotective functions. The protein is Early light-induced protein 1, chloroplastic of Arabidopsis thaliana (Mouse-ear cress).